Consider the following 440-residue polypeptide: D-serine dehydratase (440 aa).

Position 116 is an N6-(pyridoxal phosphate)lysine (lysine 116).

The protein belongs to the serine/threonine dehydratase family. DsdA subfamily. Monomer. The cofactor is pyridoxal 5'-phosphate.

It catalyses the reaction D-serine = pyruvate + NH4(+). The protein is D-serine dehydratase of Salmonella typhi.